Here is a 1943-residue protein sequence, read N- to C-terminus: MHHSTRKRWLASIGAVAAVATLATGGAVTAQAADAPVIKNADVAYPSFKGSDDPMKTAANNTTYNPAVSYLQETFDNDVKNLAGIDTDHDFWIDKILTRTGAQPTGKGTNDKGAYSYEGSDGNNYLFTRGRAAYMYTHTPNQLGFVGDTAYWDQTSRSGFTVTVNADGSNQTLNEDASQRKQTPSYFTSLFQTGGKSLKIKEVKYITYNNVMVANLTVESTQDRDVTLTTASPFAAEGADGATELTGRVNVKNNLTTIYPRFSANNQDGSNWIVSGGKLTSTLSLKANEPQTVKIQLGLIANELPDSTKEYEARYTGDLKDAAASYKDSVTTYNKWWVDNAPYVDTPEDNIDKTVVYRWWLSRFNMLDANMPGNTFQYPTSIEGVLGYNNQIVLTSGMFMMDTKWFRNPEYSYGTWLSAGDTAKKSKAGYYYYHDNPGDPANWNHSYTQYITRAGWDSYKVHGGPSTVAEELADQGAEDVQGLLASKSEPDNNDNQNNNDNSLIDWSWWSMTGNDADAVSFSEPGRSGQRMDRADGSANMWANANAAAQAYKAAGDTANAEKMQAIADKIQKEVTTELWDKSDNLLKHKWLNDGAFAKYKEINNYYPYSEGLMPTGNEDYNKALRLFEDSNEFPIFPFFTANQADKAALNFPGSNNFSIINAQPLLQVYSAGIRNYDAAKNGYITNEQFKKLLYWVAFAHYQGGDNNYPDQNEFWNEDNNNVGDVNGDGVINNLDKNLDAAQNGGKITYRSWIHHTQLGTTNWTMVEDVAGMVPREDNKIELNPIEIPGWNYFTVNNLRYHDQDVSIVWDKDGSHYGGPAGYSLYVGGKLAFTSDKLAHLIYDPAAGTVEVKDDSSAQVTVGAEAVKNVKAANQVTFNADQRVTDLFAKSGTNVDSASKSTTNVAKDADVTGTTYAEKDTNYPAKNAVDGKTVMESFWGTKGSENKTDTLNIKFKDGKQKIDDIRLYFYQSSSSQTISGYAEPANYKLEYQKDDGTWAPIADQVRTPNYAGANYNRIQFTPVETTTIRVTFTPQAGMAVGVKEIEAYNTGIKADGTSENQTPQVDAYVSSSTSSGAKLVGTVKDDGLPAEGDVTTTWSQVSGPEGGTAKFVDASAASTTVTFNKEGDYVLKLTASDGEKEGSKEITVHGIPSDGTVNVAPQSSASASYTNGYQPKDNAKKVIDGQVVYANTPNETWNNWGDSTGVEPWLQLKWAGKVPLKKAKVFFWTDGGGVPMVSSWKLQYADADGNWQDVKLADGQSYTVNRNEGNEVKFADAVETDKLRVVFPKGAIVGASEFEAYAIEPVSVDEVNRLVQTGSKADDLKLPSTVSAVYTDGSRRDLAVTWGKVTDAQLAADAVFDVKGTVAGALNGTVAHIAARSDTASQTVGNAQPVEQTVYQNAKSIDLPATVPVKFPNGYNDDRKVTWKDADIKAIDLTKVGDYEVAGTVDDGSSSAAAKLTVHVVADPNGSSTPEPEPEPLVGWIEGKATRTTISPDSEATWSPAEGKLNDGVVVDDTWPTTDDQNVNDKVWGSWGKAKDGMYAQYDFGQSVTIDQSRAQFWANFAETDDSKGGLEVPDAWKIQYLAEDGSWKDVEPTEDYTVVRNSPASRADTDAKGWSAVTFKPVTTKSLRLVLTPYTGSSTFGAAVAEWGVHGIDGTEPEPTPVDKTALESALDTANGLDASRYTAASWAEFQQIIDAAQAVYDDANATAEQVAEQVTKLEDGQKALVALATDVEKSTLQAAIDAAKAEAASGKYTDKSVEALNKAIEAAEGVLKVGEVGEVTQAAVQEASASLNKAVKALEEKPAAETVKKESLEASIEQAKKADKSKYTEEAWQALQSQIAAAQKVYDDKDAKQADVDAAQDALDKAFWATKVEQKPGSQQPGVTDTDKDDKDNKGDRVPPTGAAVSVVAAAAVLLTAAGVTILKRRQSGDHGSARHSA.

Residues 1–32 (MHHSTRKRWLASIGAVAAVATLATGGAVTAQA) constitute a signal peptide (tat-type signal). F5/8 type C domains are found at residues 892-1049 (TNVD…AYNT) and 1142-1302 (SKEI…AYAI). The region spanning 1061 to 1157 (TPQVDAYVSS…HGIPSDGTVN (97 aa)) is the PKD domain. FIVAR domains are found at residues 1678 to 1716 (ANGL…EQVA), 1746 to 1790 (DAAK…AAVQ), and 1823 to 1864 (QAKK…VDAA). The interval 1875 to 1906 (TKVEQKPGSQQPGVTDTDKDDKDNKGDRVPPT) is disordered. The segment covering 1890 to 1902 (DTDKDDKDNKGDR) has biased composition (basic and acidic residues). Residues 1908-1928 (AAVSVVAAAAVLLTAAGVTIL) form a helical membrane-spanning segment.

The protein belongs to the glycosyl hydrolase 121 family. Predicted to be exported by the Tat system. The position of the signal peptide cleavage has not been experimentally proven.

The protein resides in the membrane. The catalysed reaction is 4-O-(beta-L-arabinofuranosyl-(1-&gt;2)-beta-L-arabinofuranosyl-(1-&gt;2)-beta-L-arabinofuranosyl)-(2S,4S)-4-hydroxyproline + H2O = 4-O-(beta-L-arabinofuranosyl)-(2S,4S)-4-hydroxyproline + beta-L-arabinofuranosyl-(1-&gt;2)-beta-L-arabinofuranose. Its function is as follows. Beta-L-arabinobiosidase that removes L-arabinofuranose-beta-1,2-L-arabinofuranose disaccharide from various substrates such as carrot extensin and potato lectin. Also acts on L-arabinofuranose (Ara)-beta-1,2-Ara-beta-1,2-Ara-beta-Hyp (Ara(3)-Hyp) but not on Ara-beta-1,3-Ara-beta-1,2-Ara-beta-1,2-Ara-beta--Hyp (Ara(4)-Hyp) or Ara-beta-1,2-Ara-beta-Hyp (Ara(2)-Hyp), suggesting a specificity for unmodified Ara(3)-Hyp substrate. In the presence of 1-alkanols, shows transglycosylation activity, retaining the anomeric configuration of the arabinofuranose residue. The chain is Beta-L-arabinobiosidase (hypBA2) from Bifidobacterium longum subsp. longum (strain ATCC 15707 / DSM 20219 / JCM 1217 / NCTC 11818 / E194b).